Consider the following 352-residue polypeptide: Holliday junction branch migration complex subunit RuvB (352 aa).

A large ATPase domain (RuvB-L) region spans residues 13–201; it reads IPRSRKELRL…FGLCHKIEFY (189 aa). ATP-binding positions include Leu-37, Arg-41, Gly-82, Lys-85, Thr-86, Thr-87, 148-150, Arg-191, Tyr-201, and Arg-238; that span reads EDF. Mg(2+) is bound at residue Thr-86. Positions 202-273 are small ATPAse domain (RuvB-S); sequence SNDELKQIIF…IIEKALDSQK (72 aa). The interval 276–352 is head domain (RuvB-H); the sequence is NRGLDNVDRK…KYISSNNEKY (77 aa). DNA is bound by residues Arg-330 and Arg-335.

The protein belongs to the RuvB family. As to quaternary structure, homohexamer. Forms an RuvA(8)-RuvB(12)-Holliday junction (HJ) complex. HJ DNA is sandwiched between 2 RuvA tetramers; dsDNA enters through RuvA and exits via RuvB. An RuvB hexamer assembles on each DNA strand where it exits the tetramer. Each RuvB hexamer is contacted by two RuvA subunits (via domain III) on 2 adjacent RuvB subunits; this complex drives branch migration. In the full resolvosome a probable DNA-RuvA(4)-RuvB(12)-RuvC(2) complex forms which resolves the HJ.

The protein resides in the cytoplasm. It carries out the reaction ATP + H2O = ADP + phosphate + H(+). In terms of biological role, the RuvA-RuvB-RuvC complex processes Holliday junction (HJ) DNA during genetic recombination and DNA repair, while the RuvA-RuvB complex plays an important role in the rescue of blocked DNA replication forks via replication fork reversal (RFR). RuvA specifically binds to HJ cruciform DNA, conferring on it an open structure. The RuvB hexamer acts as an ATP-dependent pump, pulling dsDNA into and through the RuvAB complex. RuvB forms 2 homohexamers on either side of HJ DNA bound by 1 or 2 RuvA tetramers; 4 subunits per hexamer contact DNA at a time. Coordinated motions by a converter formed by DNA-disengaged RuvB subunits stimulates ATP hydrolysis and nucleotide exchange. Immobilization of the converter enables RuvB to convert the ATP-contained energy into a lever motion, pulling 2 nucleotides of DNA out of the RuvA tetramer per ATP hydrolyzed, thus driving DNA branch migration. The RuvB motors rotate together with the DNA substrate, which together with the progressing nucleotide cycle form the mechanistic basis for DNA recombination by continuous HJ branch migration. Branch migration allows RuvC to scan DNA until it finds its consensus sequence, where it cleaves and resolves cruciform DNA. The chain is Holliday junction branch migration complex subunit RuvB from Prochlorococcus marinus (strain MIT 9515).